Here is a 99-residue protein sequence, read N- to C-terminus: Integration host factor subunit alpha (99 aa).

The protein belongs to the bacterial histone-like protein family. In terms of assembly, heterodimer of an alpha and a beta chain.

In terms of biological role, this protein is one of the two subunits of integration host factor, a specific DNA-binding protein that functions in genetic recombination as well as in transcriptional and translational control. The chain is Integration host factor subunit alpha from Nitrosococcus oceani (strain ATCC 19707 / BCRC 17464 / JCM 30415 / NCIMB 11848 / C-107).